Consider the following 531-residue polypeptide: RCC1 and BTB domain-containing protein 1 (531 aa).

6 RCC1 repeats span residues 40–91 (NDEV…LLTT), 93–145 (DGVV…ALAA), 147–198 (GELF…AVLD), 199–250 (SGEV…ALTD), 252–302 (GLLY…AAKT), and 304–356 (GGHV…FLTV). BTB domains follow at residues 370-437 (ADLK…DLPP) and 470-499 (ENAFSLFSAAVRYDAEDLEEFCFKFCINHL).

In terms of tissue distribution, in the retina, mainly expressed in the inner retina with strong signals reaching up to the outer plexiform layer (at protein level).

It is found in the nucleus. In terms of biological role, may be involved in cell cycle regulation by chromatin remodeling. The sequence is that of RCC1 and BTB domain-containing protein 1 (Rcbtb1) from Mus musculus (Mouse).